The primary structure comprises 59 residues: Large ribosomal subunit protein bL32c (59 aa).

Residues 37 to 59 (SRSFSSGNEHPKPKGFSGQQANK) form a disordered region.

This sequence belongs to the bacterial ribosomal protein bL32 family.

The protein resides in the plastid. It is found in the chloroplast. The protein is Large ribosomal subunit protein bL32c of Saccharum hybrid (Sugarcane).